The following is a 392-amino-acid chain: Chaperone protein DnaJ (392 aa).

The J domain occupies 5-75 (DYYEVLGIDK…QKKQQYDQFG (71 aa)). The segment at 148 to 229 (GVEKTIKYKR…CHGTGTAKET (82 aa)) adopts a CR-type zinc-finger fold. Residues C161, C164, C177, C180, C203, C206, C217, and C220 each coordinate Zn(2+). 4 CXXCXGXG motif repeats span residues 161-168 (CENCHGTG), 177-184 (CPTCNGQG), 203-210 (CPDCHGTG), and 217-224 (CKHCHGTG).

This sequence belongs to the DnaJ family. In terms of assembly, homodimer. Zn(2+) is required as a cofactor.

Its subcellular location is the cytoplasm. Functionally, participates actively in the response to hyperosmotic and heat shock by preventing the aggregation of stress-denatured proteins and by disaggregating proteins, also in an autonomous, DnaK-independent fashion. Unfolded proteins bind initially to DnaJ; upon interaction with the DnaJ-bound protein, DnaK hydrolyzes its bound ATP, resulting in the formation of a stable complex. GrpE releases ADP from DnaK; ATP binding to DnaK triggers the release of the substrate protein, thus completing the reaction cycle. Several rounds of ATP-dependent interactions between DnaJ, DnaK and GrpE are required for fully efficient folding. Also involved, together with DnaK and GrpE, in the DNA replication of plasmids through activation of initiation proteins. This is Chaperone protein DnaJ from Fusobacterium nucleatum subsp. nucleatum (strain ATCC 25586 / DSM 15643 / BCRC 10681 / CIP 101130 / JCM 8532 / KCTC 2640 / LMG 13131 / VPI 4355).